The sequence spans 192 residues: MSEYLLLLISTVLVNNFVLVKFLGLCPFMGVSSKLESAIGMSMATTFVLTLASILSYLVNQYLLLPFDLGYLRTMSFILVIAVVVQFTEMVVQKTSAALHRALGIYLPLITTNCAVLGVALLNVNEKHDFIQSAIYGFGAAVGFSLVLILFSAMRERLAAADVPEPFKGGAIAMITAGLMSLAFMGFTGLVK.

Helical transmembrane passes span 5–25 (LLLL…FLGL), 39–59 (IGMS…SYLV), 65–85 (LPFD…AVVV), 102–122 (ALGI…VALL), 134–154 (AIYG…FSAM), and 171–191 (AIAM…TGLV).

This sequence belongs to the NqrDE/RnfAE family. As to quaternary structure, the complex is composed of six subunits: RnfA, RnfB, RnfC, RnfD, RnfE and RnfG.

The protein localises to the cell inner membrane. In terms of biological role, part of a membrane-bound complex that couples electron transfer with translocation of ions across the membrane. This chain is Ion-translocating oxidoreductase complex subunit A, found in Shewanella oneidensis (strain ATCC 700550 / JCM 31522 / CIP 106686 / LMG 19005 / NCIMB 14063 / MR-1).